Here is a 461-residue protein sequence, read N- to C-terminus: Phosphatidate cytidylyltransferase 1 (461 aa).

Residues 1–68 (MLELRHRGGC…PEVPPSSDRT (68 aa)) are disordered. Arginine 7 is subject to Omega-N-methylarginine. Over residues 22 to 56 (REGEAAGGDHETESTSDKETDIDDRYGDLDARGDS) the composition is skewed to basic and acidic residues. Residues serine 35 and serine 37 each carry the phosphoserine modification. 6 consecutive transmembrane segments (helical) span residues 96 to 116 (MISLFFLIIYMGSFMLMLLVL), 149 to 169 (FLLCVNYFFYGETVADYFATF), 183 to 203 (HRFISFALYLAGFCMFVLSLV), 230 to 250 (LVIQNLFEGMIWFLVPISSVI), 279 to 299 (GFIGGFFSTVIFGFIAAYVLS), and 357 to 377 (IALSTFASLIGPFGGFFASGF).

This sequence belongs to the CDS family. In terms of assembly, homodimer. Interacts with FOS; this interaction may enhance catalytic activity. Mg(2+) serves as cofactor. Brain, retina and testis. Found in cerebellar Purkinje cells, pineal body, inner segment of photoreceptor cells and postmitotic spermatocytes and spermatids.

It is found in the endoplasmic reticulum membrane. It carries out the reaction a 1,2-diacyl-sn-glycero-3-phosphate + CTP + H(+) = a CDP-1,2-diacyl-sn-glycerol + diphosphate. It catalyses the reaction 1-octadecanoyl-2-(5Z,8Z,11Z,14Z-eicosatetraenoyl)-sn-glycero-3-phosphate + CTP + H(+) = 1-octadecanoyl-2-(5Z,8Z,11Z,14Z-eicosatetraenoyl)-sn-glycero-3-cytidine-5'-diphosphate + diphosphate. The catalysed reaction is 1-octadecanoyl-2-(9Z,12Z-octadecadienoyl)-sn-glycero-3-phosphate + CTP + H(+) = 1-octadecanoyl-2-(9Z,12Z-octadecadienoyl)-sn-glycero-3-cytidine-5'-diphosphate + diphosphate. The enzyme catalyses 1-hexadecanoyl-2-(5Z,8Z,11Z,14Z-eicosatetraenoyl)-sn-glycero-3-phosphate + CTP + H(+) = 1-hexadecanoyl-2-(5Z,8Z,11Z,14Z-eicosatetraenoyl)-sn-glycero-3-cytidine-5'-diphosphate + diphosphate. It carries out the reaction 1,2-di-(5Z,8Z,11Z,14Z)-eicosatetraenoyl-sn-glycero-3-phosphate + CTP + H(+) = 1,2-di-(5Z,8Z,11Z,14Z-eicosatetraenoyl)-sn-glycero-3-cytidine-5'-diphosphate + diphosphate. It catalyses the reaction 1-octadecanoyl-2-(9Z-octadecenoyl)-sn-glycero-3-phosphate + CTP + H(+) = 1-octadecanoyl-2-(9Z-octadecenoyl)-sn-glycero-3-cytidine-5'-diphosphate + diphosphate. The catalysed reaction is 1-octadecanoyl-2-(4Z,7Z,10Z,13Z,16Z,19Z-docosahexaenoyl)-sn-glycero-3-phosphate + CTP + H(+) = 1-octadecanoyl-2-(4Z,7Z,10Z,13Z,16Z,19Z-docosahexaenoyl)-sn-glycero-3-cytidine-5'-diphosphate + diphosphate. The enzyme catalyses 1,2-di-(9Z,12Z-octadecadienoyl)-sn-glycero-3-phosphate + CTP + H(+) = 1,2-di-(9Z,12Z-octadecadienoyl)-sn-glycero-3-cytidine-5'-diphosphate + diphosphate. It carries out the reaction 1,2-di-(9Z-octadecenoyl)-sn-glycero-3-phosphate + CTP + H(+) = 1,2-di-(9Z-octadecenoyl)-sn-glycero-3-cytidine-5'-diphosphate + diphosphate. Its pathway is phospholipid metabolism; CDP-diacylglycerol biosynthesis; CDP-diacylglycerol from sn-glycerol 3-phosphate: step 3/3. Its activity is regulated as follows. Activated by GTP. Inhibited by CDP-diacylglycerol and by phosphatidylglycerol 4,5-bisphosphate (PPI2). Catalyzes the conversion of phosphatidic acid (PA) to CDP-diacylglycerol (CDP-DAG), an essential intermediate in the synthesis of phosphatidylglycerol, cardiolipin and phosphatidylinositol. Exhibits almost no acyl chain preference for PA, showing no discrimination for the sn-1/sn-2 acyl chain composition of PAs. Plays an important role in regulatinng the growth of lipid droplets which are storage organelles at the center of lipid and energy homeostasis. Positively regulates the differentiation and development of adipocytes. The sequence is that of Phosphatidate cytidylyltransferase 1 from Rattus norvegicus (Rat).